The sequence spans 196 residues: MEIDLLQYEKKYQEYIVAGIDEAGRGPLAGPVVASAVVIDNTNIITGIKDSKKLSKRKRELLYEQITSNYIWSTAIISHTEIDEINILEATKKACSIAAANLTIKPEIVLVDGNMQFNDKRFVSIIKGDNLSLSIAAASIVAKITRDRLMLDLSTEFPQYLWYKNSGYGTKEHIQAINTHGLSPYHRKSFRYSCFI.

The region spanning 15–196 (YIVAGIDEAG…RKSFRYSCFI (182 aa)) is the RNase H type-2 domain. Asp21, Glu22, and Asp112 together coordinate a divalent metal cation.

It belongs to the RNase HII family. Mn(2+) is required as a cofactor. Requires Mg(2+) as cofactor.

It is found in the cytoplasm. The enzyme catalyses Endonucleolytic cleavage to 5'-phosphomonoester.. Functionally, endonuclease that specifically degrades the RNA of RNA-DNA hybrids. The polypeptide is Ribonuclease HII (Rickettsia canadensis (strain McKiel)).